Here is a 193-residue protein sequence, read N- to C-terminus: Holliday junction branch migration complex subunit RuvA (193 aa).

Positions 1 to 64 (MIGRIAGILL…EDAHLLYGFL (64 aa)) are domain I. A domain II region spans residues 65–139 (TPQERTTFRE…GKLGADLGAL (75 aa)). Residues 139–143 (LAGAA) form a flexible linker region. Positions 144 to 193 (SQSDHATDILNALVALGYSEKEGLAAIKNVPAGTGVSEGIKLALKALSKV) are domain III.

This sequence belongs to the RuvA family. As to quaternary structure, homotetramer. Forms an RuvA(8)-RuvB(12)-Holliday junction (HJ) complex. HJ DNA is sandwiched between 2 RuvA tetramers; dsDNA enters through RuvA and exits via RuvB. An RuvB hexamer assembles on each DNA strand where it exits the tetramer. Each RuvB hexamer is contacted by two RuvA subunits (via domain III) on 2 adjacent RuvB subunits; this complex drives branch migration. In the full resolvosome a probable DNA-RuvA(4)-RuvB(12)-RuvC(2) complex forms which resolves the HJ.

The protein localises to the cytoplasm. In terms of biological role, the RuvA-RuvB-RuvC complex processes Holliday junction (HJ) DNA during genetic recombination and DNA repair, while the RuvA-RuvB complex plays an important role in the rescue of blocked DNA replication forks via replication fork reversal (RFR). RuvA specifically binds to HJ cruciform DNA, conferring on it an open structure. The RuvB hexamer acts as an ATP-dependent pump, pulling dsDNA into and through the RuvAB complex. HJ branch migration allows RuvC to scan DNA until it finds its consensus sequence, where it cleaves and resolves the cruciform DNA. In Burkholderia ambifaria (strain MC40-6), this protein is Holliday junction branch migration complex subunit RuvA.